The primary structure comprises 346 residues: [LysW]-lysine/[LysW]-ornithine hydrolase (346 aa).

Histidine 67 provides a ligand contact to Zn(2+). Aspartate 69 is an active-site residue. Residue aspartate 91 participates in Zn(2+) binding. Glutamate 121 acts as the Proton acceptor in catalysis. Zn(2+) is bound by residues glutamate 122, glutamate 145, and histidine 316.

Belongs to the peptidase M20A family. LysK subfamily. Requires Zn(2+) as cofactor. Co(2+) is required as a cofactor.

Its subcellular location is the cytoplasm. It carries out the reaction [amino-group carrier protein]-C-terminal-gamma-(L-lysyl)-L-glutamate + H2O = [amino-group carrier protein]-C-terminal-L-glutamate + L-lysine. The enzyme catalyses [amino-group carrier protein]-C-terminal-gamma-(L-ornithyl)-L-glutamate + H2O = [amino-group carrier protein]-C-terminal-L-glutamate + L-ornithine. It functions in the pathway amino-acid biosynthesis; L-lysine biosynthesis via AAA pathway; L-lysine from L-alpha-aminoadipate (Thermus route): step 5/5. It participates in amino-acid biosynthesis; L-arginine biosynthesis. Functionally, catalyzes the release of L-lysine from [LysW]-gamma-L-lysine and the release of L-ornithine from [LysW]-L-ornithine. This chain is [LysW]-lysine/[LysW]-ornithine hydrolase, found in Sulfurisphaera tokodaii (strain DSM 16993 / JCM 10545 / NBRC 100140 / 7) (Sulfolobus tokodaii).